The sequence spans 347 residues: N-acetyl-gamma-glutamyl-phosphate reductase (347 aa).

C152 is a catalytic residue.

This sequence belongs to the NAGSA dehydrogenase family. Type 1 subfamily.

It is found in the cytoplasm. The catalysed reaction is N-acetyl-L-glutamate 5-semialdehyde + phosphate + NADP(+) = N-acetyl-L-glutamyl 5-phosphate + NADPH + H(+). Its pathway is amino-acid biosynthesis; L-arginine biosynthesis; N(2)-acetyl-L-ornithine from L-glutamate: step 3/4. In terms of biological role, catalyzes the NADPH-dependent reduction of N-acetyl-5-glutamyl phosphate to yield N-acetyl-L-glutamate 5-semialdehyde. The protein is N-acetyl-gamma-glutamyl-phosphate reductase of Ehrlichia ruminantium (strain Gardel).